Consider the following 494-residue polypeptide: Tyrosinase (494 aa).

H38, H53, C64, H224, H228, and H256 together coordinate Cu cation.

This sequence belongs to the tyrosinase family. It depends on Cu(2+) as a cofactor.

It carries out the reaction 2 L-dopa + O2 = 2 L-dopaquinone + 2 H2O. The enzyme catalyses L-tyrosine + O2 = L-dopaquinone + H2O. In Rhizobium meliloti (Ensifer meliloti), this protein is Tyrosinase (mepA).